Here is a 352-residue protein sequence, read N- to C-terminus: 3-isopropylmalate dehydrogenase (352 aa).

Position 76 to 89 (76 to 89 (GYKWENLPHDKKPE)) interacts with NAD(+). The substrate site is built by Arg96, Arg106, Arg134, and Asp220. Asp220, Asp244, and Asp248 together coordinate Mg(2+). 277–289 (GSAPDIAGQNKAN) lines the NAD(+) pocket.

Belongs to the isocitrate and isopropylmalate dehydrogenases family. LeuB type 1 subfamily. As to quaternary structure, homodimer. It depends on Mg(2+) as a cofactor. The cofactor is Mn(2+).

Its subcellular location is the cytoplasm. It carries out the reaction (2R,3S)-3-isopropylmalate + NAD(+) = 4-methyl-2-oxopentanoate + CO2 + NADH. The protein operates within amino-acid biosynthesis; L-leucine biosynthesis; L-leucine from 3-methyl-2-oxobutanoate: step 3/4. Its function is as follows. Catalyzes the oxidation of 3-carboxy-2-hydroxy-4-methylpentanoate (3-isopropylmalate) to 3-carboxy-4-methyl-2-oxopentanoate. The product decarboxylates to 4-methyl-2 oxopentanoate. In Chlorobaculum tepidum (strain ATCC 49652 / DSM 12025 / NBRC 103806 / TLS) (Chlorobium tepidum), this protein is 3-isopropylmalate dehydrogenase.